The following is a 292-amino-acid chain: Nitrogenase iron protein (292 aa).

Gly8–Ser15 is a binding site for ATP. Residue Cys96 coordinates [4Fe-4S] cluster. Arg99 is subject to ADP-ribosylarginine; by dinitrogenase reductase ADP-ribosyltransferase. Residue Cys130 participates in [4Fe-4S] cluster binding.

Belongs to the NifH/BchL/ChlL family. As to quaternary structure, homodimer. It depends on [4Fe-4S] cluster as a cofactor. Post-translationally, the reversible ADP-ribosylation of Arg-99 inactivates the nitrogenase reductase and regulates nitrogenase activity.

The enzyme catalyses N2 + 8 reduced [2Fe-2S]-[ferredoxin] + 16 ATP + 16 H2O = H2 + 8 oxidized [2Fe-2S]-[ferredoxin] + 2 NH4(+) + 16 ADP + 16 phosphate + 6 H(+). In terms of biological role, the key enzymatic reactions in nitrogen fixation are catalyzed by the nitrogenase complex, which has 2 components: the iron protein and the molybdenum-iron protein. This is Nitrogenase iron protein from Synechococcus sp. (strain JA-3-3Ab) (Cyanobacteria bacterium Yellowstone A-Prime).